The sequence spans 160 residues: Large ribosomal subunit protein eL21 (160 aa).

Composition is skewed to basic and acidic residues over residues 112 to 123 (NDQKKKEAKEKG) and 136 to 145 (REAHFVRTNG). Residues 112-145 (NDQKKKEAKEKGTWVQLKRQPAPPREAHFVRTNG) form a disordered region.

It belongs to the eukaryotic ribosomal protein eL21 family. Component of the large ribosomal subunit.

It localises to the cytoplasm. The protein localises to the cytosol. It is found in the endoplasmic reticulum. Its function is as follows. Component of the large ribosomal subunit. The ribosome is a large ribonucleoprotein complex responsible for the synthesis of proteins in the cell. In Mus musculus (Mouse), this protein is Large ribosomal subunit protein eL21.